We begin with the raw amino-acid sequence, 319 residues long: ATP-dependent 6-phosphofructokinase (319 aa).

G11 serves as a coordination point for ATP. 21 to 25 contacts ADP; that stretch reads RAVVR. Residues 72–73 and 102–105 contribute to the ATP site; these read RS and GDGS. Position 103 (D103) interacts with Mg(2+). Residue 125–127 participates in substrate binding; it reads TID. The active-site Proton acceptor is D127. Residue R154 coordinates ADP. Residues R162 and 169–171 contribute to the substrate site; that span reads MGR. ADP is bound by residues 185–187 and 213–215; these read GAE and KMH. Residues E222, R243, and 249–252 contribute to the substrate site; that span reads HIQR.

Belongs to the phosphofructokinase type A (PFKA) family. ATP-dependent PFK group I subfamily. Prokaryotic clade 'B1' sub-subfamily. As to quaternary structure, homotetramer. It depends on Mg(2+) as a cofactor.

The protein resides in the cytoplasm. The catalysed reaction is beta-D-fructose 6-phosphate + ATP = beta-D-fructose 1,6-bisphosphate + ADP + H(+). The protein operates within carbohydrate degradation; glycolysis; D-glyceraldehyde 3-phosphate and glycerone phosphate from D-glucose: step 3/4. Its activity is regulated as follows. Allosterically activated by ADP and other diphosphonucleosides, and allosterically inhibited by phosphoenolpyruvate. In terms of biological role, catalyzes the phosphorylation of D-fructose 6-phosphate to fructose 1,6-bisphosphate by ATP, the first committing step of glycolysis. The polypeptide is ATP-dependent 6-phosphofructokinase (Clostridium tetani (strain Massachusetts / E88)).